Here is a 238-residue protein sequence, read N- to C-terminus: 2-C-methyl-D-erythritol 4-phosphate cytidylyltransferase (238 aa).

Belongs to the IspD/TarI cytidylyltransferase family. IspD subfamily.

It catalyses the reaction 2-C-methyl-D-erythritol 4-phosphate + CTP + H(+) = 4-CDP-2-C-methyl-D-erythritol + diphosphate. It participates in isoprenoid biosynthesis; isopentenyl diphosphate biosynthesis via DXP pathway; isopentenyl diphosphate from 1-deoxy-D-xylulose 5-phosphate: step 2/6. Catalyzes the formation of 4-diphosphocytidyl-2-C-methyl-D-erythritol from CTP and 2-C-methyl-D-erythritol 4-phosphate (MEP). This is 2-C-methyl-D-erythritol 4-phosphate cytidylyltransferase from Alteromonas mediterranea (strain DSM 17117 / CIP 110805 / LMG 28347 / Deep ecotype).